Reading from the N-terminus, the 220-residue chain is UPF0758 protein CKO_05095 (220 aa).

The 123-residue stretch at alanine 98–isoleucine 220 folds into the MPN domain. Residues histidine 169, histidine 171, and aspartate 182 each contribute to the Zn(2+) site. The short motif at histidine 169–aspartate 182 is the JAMM motif element.

It belongs to the UPF0758 family. YicR subfamily.

This Citrobacter koseri (strain ATCC BAA-895 / CDC 4225-83 / SGSC4696) protein is UPF0758 protein CKO_05095.